Reading from the N-terminus, the 755-residue chain is MEVHNSLHCTAPVLSSLQASASGSGTPKKTAASSAAAQNSKQLLDQLSQQQKAQEEAETHSRRDCDSPASSNSEPEKDLDELRDLNGSLTGSGSVGKSNGSLSGASSTTSAPAGTSTPGSANTNGSASGAASLSVVSATAHLKKRITSSRTPTRKAHRIKFYRNGDRFYPGITIPVSNERYRSFESLYEDLTRLLEENVKIPGAVRTIYDMVGKKITALEELEDGQSYVCSCNNENFKKVDYNTSSQPLANLTLANNSRTSSHRLAKLQRPASPLKNGVPNSIAPVPVGGGAAANGSPLNTSRFSERDSVVHPRIVTLIRNGTKPRRIIRLLLNKRNSPSFDHVLTAITQVVRLDTGYVRKVFTLSGVSVLQLSDFFGSDDVFFAYGTERVNTVDDFKLESEEQRAINAIRKTLRTAGTACKGPKPKMPVKSKKAYPPGELKAQAEAQLQASAAPANEDEEQAALLKSTGVEVAELPAAIRDNYTLSQIIGDGNFAIVLKIKDRQTGIPHALKIIDKSKCKGKEHYIDAEVRVMKKLHHPHIISLIMDVDQDTNMYLVLEYVSGGDLFDAITQVTRFSESQSRIMIRHLGSAMSYLHSMGIVHRDIKPENLLVELDDFGNVVQLKLADFGLACEVTEPLYAVCGTPTYVAPEILLEVGYGLKIDVWAAGIILYILLCGFPPFVAPDNQQEPLFDAIISGVYEFPDPYWSDIGDGVRDLIANMLQSDPDVRFTSEDILDHYWTMGNEEIGCGDYSR.

Residues 18–52 (QASASGSGTPKKTAASSAAAQNSKQLLDQLSQQQK) show a composition bias toward low complexity. The interval 18–128 (QASASGSGTP…GSANTNGSAS (111 aa)) is disordered. Basic and acidic residues-rich tracts occupy residues 53-66 (AQEEAETHSRRDCD) and 74-84 (EPEKDLDELRD). Over residues 87–99 (GSLTGSGSVGKSN) the composition is skewed to polar residues. A compositionally biased stretch (low complexity) spans 100 to 128 (GSLSGASSTTSAPAGTSTPGSANTNGSAS). Doublecortin domains follow at residues 157 to 243 (HRIK…VDYN) and 314 to 397 (RIVT…VDDF). In terms of domain architecture, Protein kinase spans 484-742 (YTLSQIIGDG…SEDILDHYWT (259 aa)). ATP is bound by residues 490–498 (IGDGNFAIV) and lysine 513. Aspartate 605 serves as the catalytic Proton acceptor.

The protein belongs to the protein kinase superfamily. CAMK Ser/Thr protein kinase family. CaMK subfamily.

The enzyme catalyses L-seryl-[protein] + ATP = O-phospho-L-seryl-[protein] + ADP + H(+). It catalyses the reaction L-threonyl-[protein] + ATP = O-phospho-L-threonyl-[protein] + ADP + H(+). This is Serine/threonine-protein kinase GL21140 from Drosophila persimilis (Fruit fly).